A 138-amino-acid polypeptide reads, in one-letter code: Large ribosomal subunit protein uL14 (138 aa).

This sequence belongs to the universal ribosomal protein uL14 family. As to quaternary structure, part of the 50S ribosomal subunit. Forms a cluster with proteins L3 and L24e, part of which may contact the 16S rRNA in 2 intersubunit bridges.

Its function is as follows. Binds to 23S rRNA. Forms part of two intersubunit bridges in the 70S ribosome. This is Large ribosomal subunit protein uL14 from Hyperthermus butylicus (strain DSM 5456 / JCM 9403 / PLM1-5).